The chain runs to 224 residues: uncharacterized protein (224 aa).

The HTH gntR-type domain maps to 10–77 (TPYYLQFYNQ…DRNGFSITSL (68 aa)). The H-T-H motif DNA-binding region spans 37-56 (ETQLAKSFGVSRSPIREAMR).

This is an uncharacterized protein from Bacillus subtilis (strain 168).